The chain runs to 218 residues: MLTIALPKGALLKDSIRLLQSAGLDFSAFLEPGNRQLQILDRQERAKALLVRNSDVPVYVEYGQAQLGVVGYDVLREKTARVAQLIDLRFGGCRMSIAVKASSPYRSVLDLPAHCRIASKFVHCARDYFHNLDLPVEIVPLSGSVELGPITGMSEAIVDLVATGQTLRENGLVEIETLFDSTARLIANPLAYRINADGISELIEELRQSVTQAIAATC.

It belongs to the ATP phosphoribosyltransferase family. Short subfamily. In terms of assembly, heteromultimer composed of HisG and HisZ subunits.

The protein resides in the cytoplasm. It catalyses the reaction 1-(5-phospho-beta-D-ribosyl)-ATP + diphosphate = 5-phospho-alpha-D-ribose 1-diphosphate + ATP. It participates in amino-acid biosynthesis; L-histidine biosynthesis; L-histidine from 5-phospho-alpha-D-ribose 1-diphosphate: step 1/9. Functionally, catalyzes the condensation of ATP and 5-phosphoribose 1-diphosphate to form N'-(5'-phosphoribosyl)-ATP (PR-ATP). Has a crucial role in the pathway because the rate of histidine biosynthesis seems to be controlled primarily by regulation of HisG enzymatic activity. In Synechococcus elongatus (strain ATCC 33912 / PCC 7942 / FACHB-805) (Anacystis nidulans R2), this protein is ATP phosphoribosyltransferase.